The chain runs to 515 residues: Cell division control protein 6 homolog (515 aa).

The segment covering 1–24 (MPTLRSATASASTAGTASPTAIAT) has biased composition (low complexity). A disordered region spans residues 1–70 (MPTLRSATAS…TPKLLSASPR (70 aa)). The segment covering 43-52 (DASQFTSPHK) has biased composition (polar residues).

This sequence belongs to the CDC6/cdc18 family.

It localises to the nucleus. Functionally, may be involved in the initiation of DNA replication. The polypeptide is Cell division control protein 6 homolog (Oryza sativa subsp. japonica (Rice)).